A 198-amino-acid polypeptide reads, in one-letter code: Nucleoid occlusion factor SlmA (198 aa).

The HTH tetR-type domain occupies 9–70 (RNRREEILQA…SLIEFIEDSL (62 aa)). The segment at residues 33–52 (TTAKLAANVGVSEAALYRHF) is a DNA-binding region (H-T-H motif). A coiled-coil region spans residues 113 to 144 (ALMFEQDRLQDRINQLFERIESQLRQVLREHK).

The protein belongs to the nucleoid occlusion factor SlmA family. In terms of assembly, homodimer. Interacts with FtsZ.

It localises to the cytoplasm. The protein resides in the nucleoid. Required for nucleoid occlusion (NO) phenomenon, which prevents Z-ring formation and cell division over the nucleoid. Acts as a DNA-associated cell division inhibitor that binds simultaneously chromosomal DNA and FtsZ, and disrupts the assembly of FtsZ polymers. SlmA-DNA-binding sequences (SBS) are dispersed on non-Ter regions of the chromosome, preventing FtsZ polymerization at these regions. This chain is Nucleoid occlusion factor SlmA, found in Pectobacterium carotovorum subsp. carotovorum (strain PC1).